A 93-amino-acid chain; its full sequence is MSLVRAHFLVKGFVQGVGFRYFVLRQAAALQLNGWVRNRYNGSVEGVVEGPEAEVKEFLDRCRRGPAWAEVKEVKVQYEEPRGETTFRIRSSV.

One can recognise an Acylphosphatase-like domain in the interval 5-91; sequence RAHFLVKGFV…RGETTFRIRS (87 aa). Catalysis depends on residues R20 and N38.

It belongs to the acylphosphatase family.

The catalysed reaction is an acyl phosphate + H2O = a carboxylate + phosphate + H(+). The sequence is that of Acylphosphatase (acyP) from Moorella thermoacetica (strain ATCC 39073 / JCM 9320).